A 465-amino-acid polypeptide reads, in one-letter code: MEEEDEEARALLAGGPDEADRGAPAAPGALPALCDPSRLVHRLLVLLLMCFLGFGSYFCYDNPAALQTQVKRDMQVNTTKFMLLYAWYSWSNVVLCFFGGFLIDRVFGIRWGTIIFSCFVCIGQVVFALGGIFNAFWLMEFGRFVFGIGGESLAVAQNTYAVSWFKGKELNLVFGLQLSMARIGSTVNMNLMGWLYSKIEALLGSAGHTTLGITLMIGGVTCILSLICALALAYLDQRAERILHKEQGKTGEVIKLTDVKDFSLPLWLIFIICVCYYVAVFPFIGLGKVFFTEKFGFSSQAASAINSVVYVISAPMSPVFGLLVDKTGKNIIWVLCAVAATLVSHMMLAFTMWNPWIAMCLLGLSYSLLACALWPMVAFVVPEHQLGTAHGFMQSIQNLGLAIISIIAGMILDSRGYLFLEVFFIACVSLSLLSVVLLYLVNRAQGGNLNYSARQREEIKFSHTE.

The segment at 1 to 23 is disordered; sequence MEEEDEEARALLAGGPDEADRGA. A Dileucine internalization motif motif is present at residues 11–12; the sequence is LL. 12 helical membrane passes run 39-59, 83-103, 113-133, 135-155, 170-191, 213-233, 266-286, 304-324, 331-351, 361-381, 392-412, and 418-438; these read LVHR…SYFC, LLYA…GFLI, TIIF…GGIF, AFWL…SLAV, LNLV…NMNL, ITLM…LALA, LWLI…FIGL, AINS…GLLV, IIWV…LAFT, LLGL…AFVV, FMQS…GMIL, and LFLE…VVLL.

Belongs to the major facilitator superfamily. In terms of assembly, homodimer. Interacts with lysosomal protein GLMP (via lumenal domain); the interaction starts while both proteins are still in the endoplasmic reticulum and is required for stabilization of MFSD1 in lysosomes but has no direct effect on its targeting to lysosomes or transporter activity.

It localises to the lysosome membrane. The enzyme catalyses L-alpha-aminoacyl-L-arginine(out) = L-alpha-aminoacyl-L-arginine(in). It catalyses the reaction L-arginyl-L-alpha-amino acid(out) = L-arginyl-L-alpha-amino acid(in). It carries out the reaction L-arginyl-glycine(out) = L-arginyl-glycine(in). The catalysed reaction is L-alpha-aminoacyl-L-lysine(out) = L-alpha-aminoacyl-L-lysine(in). The enzyme catalyses L-aspartyl-L-lysine(out) = L-aspartyl-L-lysine(in). It catalyses the reaction L-alanyl-L-lysine(out) = L-alanyl-L-lysine(in). It carries out the reaction L-lysyl-L-alpha-amino acid(out) = L-lysyl-L-alpha-amino acid(in). The catalysed reaction is L-lysyl-L-alanine(out) = L-lysyl-L-alanine(in). The enzyme catalyses L-lysyl-L-lysine(out) = L-lysyl-L-lysine(in). It catalyses the reaction L-lysyl-glycine(out) = L-lysyl-glycine(in). It carries out the reaction L-alpha-aminoacyl-L-histidine(out) = L-alpha-aminoacyl-L-histidine(in). The catalysed reaction is L-histidyl-L-alpha-amino acid(out) = L-histidyl-L-alpha-amino acid(in). The enzyme catalyses L-histidyl-glycine(out) = L-histidyl-glycine(in). Functionally, lysosomal dipeptide uniporter that selectively exports lysine, arginine or histidine-containing dipeptides with a net positive charge from the lysosome lumen into the cytosol. Could play a role in a specific type of protein O-glycosylation indirectly regulating macrophages migration and tissue invasion. Also essential for liver homeostasis. This chain is Lysosomal dipeptide transporter MFSD1, found in Pongo abelii (Sumatran orangutan).